The primary structure comprises 336 residues: MSRPSLTRFLIEEQHAGRIDAELRQLITIVSRACKRISIAVSKGALGGVLGDAGTGNVQGEAQKKLDVLSNDILLEANAWGGHLAACASEEMDHSQPVPDQYPSGDFLLLFDPLDGSSNIDVNVSVGTIFSVLRAPKGTEKPGDEHFLQPGTQQVAAGYCIYGPSTMLVLTLGHGTHAFTLEREEGSFLLTQANMRVPEDTAEYAINMSNQRHWEPAMQAYVGDLLAGKDGARGKDFNMRWIASMVADVHRILTRGGIFIYPWDKKDPSKPGKLRLMYEANPMSMLVEQAGGAATTGRERILDIQPTQLHQRVPVFLGSKNEVAEATRYHLDADKA.

Mg(2+) contacts are provided by E90, D112, L114, and D115. Substrate-binding positions include 115-118 (DGSS), N207, and K273. E279 provides a ligand contact to Mg(2+).

This sequence belongs to the FBPase class 1 family. In terms of assembly, homotetramer. Mg(2+) is required as a cofactor.

Its subcellular location is the cytoplasm. The catalysed reaction is beta-D-fructose 1,6-bisphosphate + H2O = beta-D-fructose 6-phosphate + phosphate. It participates in carbohydrate biosynthesis; gluconeogenesis. This is Fructose-1,6-bisphosphatase class 1 from Xanthomonas axonopodis pv. citri (strain 306).